Consider the following 130-residue polypeptide: RutC family protein HI_0719 (130 aa).

Residue C109 is part of the active site.

This sequence belongs to the RutC family. As to quaternary structure, homotrimer.

The sequence is that of RutC family protein HI_0719 from Haemophilus influenzae (strain ATCC 51907 / DSM 11121 / KW20 / Rd).